The primary structure comprises 185 residues: MIEDIQEDADRRMAKAVESLKHDLARLRTGRAHTSLLDQVNVEYYGMEVPIKQAANVSVEDSRTLAVTPFEKHMVPAIEKAIMASNLGLSPVSAGQVIRVPLPSLTEDRRKEMVRLVKNEAEQARVAIRNVRRDANSDLKDLAKGKDITEDEERRAQEAIQKLTDRYVAQVDDLLEEKERELMEV.

The protein belongs to the RRF family.

The protein localises to the cytoplasm. Responsible for the release of ribosomes from messenger RNA at the termination of protein biosynthesis. May increase the efficiency of translation by recycling ribosomes from one round of translation to another. In Halorhodospira halophila (strain DSM 244 / SL1) (Ectothiorhodospira halophila (strain DSM 244 / SL1)), this protein is Ribosome-recycling factor.